Consider the following 406-residue polypeptide: CRISP/Allergen/PR-1 (406 aa).

The first 18 residues, 1-18 (MHFQVILMMMWLWLEAEG), serve as a signal peptide directing secretion. An N-linked (GlcNAc...) asparagine glycan is attached at Asn39. Residues 58–205 (LREHNKLRSR…TFKDLYTCNY (148 aa)) form the SCP domain.

This sequence belongs to the CRISP family. In terms of processing, contains 9 disulfide bonds. As to expression, expressed by the venom gland.

The protein localises to the secreted. This is CRISP/Allergen/PR-1 from Trittame loki (Brush-footed trapdoor spider).